Here is a 239-residue protein sequence, read N- to C-terminus: tRNA (guanine-N(7)-)-methyltransferase (239 aa).

S-adenosyl-L-methionine is bound by residues Glu-69, Glu-94, Asp-121, and Asp-144. The active site involves Asp-144. Lys-148 serves as a coordination point for substrate. Positions 150–155 are interaction with RNA; that stretch reads RHNKRR. Substrate contacts are provided by residues Asp-180 and 217 to 220; that span reads TKFE.

The protein belongs to the class I-like SAM-binding methyltransferase superfamily. TrmB family. Monomer.

It carries out the reaction guanosine(46) in tRNA + S-adenosyl-L-methionine = N(7)-methylguanosine(46) in tRNA + S-adenosyl-L-homocysteine. Its pathway is tRNA modification; N(7)-methylguanine-tRNA biosynthesis. Catalyzes the formation of N(7)-methylguanine at position 46 (m7G46) in tRNA. This is tRNA (guanine-N(7)-)-methyltransferase from Yersinia enterocolitica serotype O:8 / biotype 1B (strain NCTC 13174 / 8081).